A 363-amino-acid chain; its full sequence is Ribosomal RNA large subunit methyltransferase M (363 aa).

Residues Ser-194, 227-230, Asp-246, Asp-266, and Asp-284 each bind S-adenosyl-L-methionine; that span reads CPGG. Lys-313 (proton acceptor) is an active-site residue.

This sequence belongs to the class I-like SAM-binding methyltransferase superfamily. RNA methyltransferase RlmE family. RlmM subfamily. As to quaternary structure, monomer.

It localises to the cytoplasm. The enzyme catalyses cytidine(2498) in 23S rRNA + S-adenosyl-L-methionine = 2'-O-methylcytidine(2498) in 23S rRNA + S-adenosyl-L-homocysteine + H(+). Catalyzes the 2'-O-methylation at nucleotide C2498 in 23S rRNA. The chain is Ribosomal RNA large subunit methyltransferase M from Mannheimia succiniciproducens (strain KCTC 0769BP / MBEL55E).